We begin with the raw amino-acid sequence, 233 residues long: Large ribosomal subunit protein uL3 (233 aa).

The protein belongs to the universal ribosomal protein uL3 family. Part of the 50S ribosomal subunit. Forms a cluster with proteins L14 and L19.

Its function is as follows. One of the primary rRNA binding proteins, it binds directly near the 3'-end of the 23S rRNA, where it nucleates assembly of the 50S subunit. This is Large ribosomal subunit protein uL3 from Ureaplasma parvum serovar 3 (strain ATCC 27815 / 27 / NCTC 11736).